A 505-amino-acid polypeptide reads, in one-letter code: Flagellin (505 aa).

The protein belongs to the bacterial flagellin family.

The protein resides in the secreted. It is found in the bacterial flagellum. Flagellin is the subunit protein which polymerizes to form the filaments of bacterial flagella. This chain is Flagellin (fliC), found in Salmonella moscow.